The chain runs to 330 residues: MQGSVTEFLKPRLVDIEQISSTHAKVTLEPLERGFGHTLGNALRRILLSSMPGCAVIEVEIEGVLHEYSTKEGVQEDILEILLNLKGLAVRVAEGKDEVFITLNKSGSGPVVAGDITHDGDVEIANPEHVICHLTDDNAEIAMRIKVERGRGYVPASARIHNEEDERPIGRLLVDATYSPVDKIAYAVEAARVEQRTDLDKLVIDMETNGTLEPEEAIRRAATILAEQLDAFVDLRDVRVPEEKEEKPEFDPILLRPVDDLELTVRSANCLKAEAIHYIGDLVQRTEVELLKTPNLGKKSLTEIKDVLASRGLSLGMRLENWPPASIAED.

Residues 1–236 (MQGSVTEFLK…EQLDAFVDLR (236 aa)) form an alpha N-terminal domain (alpha-NTD) region. Residues 250-330 (FDPILLRPVD…NWPPASIAED (81 aa)) form an alpha C-terminal domain (alpha-CTD) region.

This sequence belongs to the RNA polymerase alpha chain family. As to quaternary structure, homodimer. The RNAP catalytic core consists of 2 alpha, 1 beta, 1 beta' and 1 omega subunit. When a sigma factor is associated with the core the holoenzyme is formed, which can initiate transcription.

The catalysed reaction is RNA(n) + a ribonucleoside 5'-triphosphate = RNA(n+1) + diphosphate. DNA-dependent RNA polymerase catalyzes the transcription of DNA into RNA using the four ribonucleoside triphosphates as substrates. This Vibrio campbellii (strain ATCC BAA-1116) protein is DNA-directed RNA polymerase subunit alpha.